Consider the following 395-residue polypeptide: Vomeronasal type-1 receptor 2 (395 aa).

A helical membrane pass occupies residues 12–32 (LYPINISAAWHLGPLPVSCFV). Residues 33–51 (SNKYQCSLAFGATTGLRVL) lie on the Extracellular side of the membrane. A helical transmembrane segment spans residues 52-72 (VVVVPQTQLSFLSSLCLVSLF). At 73–93 (LHSLVSAHGEKPTKPVGLDPT) the chain is on the cytoplasmic side. Residues 94–114 (LFQVVVGILGNFSLLYYYMFL) form a helical membrane-spanning segment. Residues 115 to 170 (YFRGYKPRSTDLILRHLTVADSLVILSKRIPETMATFGLKHFDNYFGCKFLLYAHR) are Extracellular-facing. The chain crosses the membrane as a helical span at residues 171–191 (VGRGVSIGSTCLLSVFQVITI). Residues 192–208 (NPRNSRWAEMKVKAPTY) are Cytoplasmic-facing. Residues 209 to 229 (IGLSNILCWAFHMLVNAIFPI) traverse the membrane as a helical segment. Residues 230 to 267 (YTTGKWSNNNITKKGDLGYCSAPLSDEVTKSVYAALTS) are Extracellular-facing. Residue N239 is glycosylated (N-linked (GlcNAc...) asparagine). Residues 268-288 (FHDVLCLGLMLWASSSIVLVL) traverse the membrane as a helical segment. Over 289–316 (YRHKQQVQHICRNNLYPNSSPGNRAIQS) the chain is Cytoplasmic. Residues 317–337 (ILALVSTFALCYALSFITYVY) traverse the membrane as a helical segment. At 338–346 (LALFDNSSW) the chain is on the extracellular side. The N-linked (GlcNAc...) asparagine glycan is linked to N343. The chain crosses the membrane as a helical span at residues 347–367 (WLVNTAALIIACFPTISPFVL). Residues 368 to 395 (MCRDPSRSRLCSICCRRNRRFFHDFRKM) are Cytoplasmic-facing.

Belongs to the G-protein coupled receptor 1 family.

The protein resides in the cell membrane. Its function is as follows. Putative pheromone receptor. In Homo sapiens (Human), this protein is Vomeronasal type-1 receptor 2 (VN1R2).